We begin with the raw amino-acid sequence, 109 residues long: Putative pterin-4-alpha-carbinolamine dehydratase (109 aa).

The protein belongs to the pterin-4-alpha-carbinolamine dehydratase family.

It carries out the reaction (4aS,6R)-4a-hydroxy-L-erythro-5,6,7,8-tetrahydrobiopterin = (6R)-L-erythro-6,7-dihydrobiopterin + H2O. The polypeptide is Putative pterin-4-alpha-carbinolamine dehydratase (Halorhodospira halophila (strain DSM 244 / SL1) (Ectothiorhodospira halophila (strain DSM 244 / SL1))).